Reading from the N-terminus, the 684-residue chain is DNA gyrase subunit B, novobiocin-sensitive (684 aa).

The interval 1 to 22 (MADSGNPNENTPSVATGENGEV) is disordered. The novobiocin-binding stretch occupies residues 154-302 (VKTDGYRWTQ…RMLSVEIAMQ (149 aa)). The Toprim domain occupies 463-577 (CEIFIVEGDS…AGHVYLSRPP (115 aa)). Mg(2+)-binding residues include Glu469, Asp542, and Asp544.

This sequence belongs to the type II topoisomerase GyrB family. As to quaternary structure, heterotetramer, composed of two GyrA and two GyrB chains. In the heterotetramer, GyrA contains the active site tyrosine that forms a transient covalent intermediate with DNA, while GyrB binds cofactors and catalyzes ATP hydrolysis. Mg(2+) is required as a cofactor. Requires Mn(2+) as cofactor. It depends on Ca(2+) as a cofactor.

The protein resides in the cytoplasm. It carries out the reaction ATP-dependent breakage, passage and rejoining of double-stranded DNA.. Functionally, a type II topoisomerase that negatively supercoils closed circular double-stranded (ds) DNA in an ATP-dependent manner to modulate DNA topology and maintain chromosomes in an underwound state. Negative supercoiling favors strand separation, and DNA replication, transcription, recombination and repair, all of which involve strand separation. Also able to catalyze the interconversion of other topological isomers of dsDNA rings, including catenanes and knotted rings. Type II topoisomerases break and join 2 DNA strands simultaneously in an ATP-dependent manner. This is DNA gyrase subunit B, novobiocin-sensitive from Streptomyces niveus (Streptomyces spheroides).